The chain runs to 551 residues: Mesoderm induction early response protein 3 (551 aa).

A compositionally biased stretch (low complexity) spans 1 to 16; sequence MAEASFGSSSPVGSLS. 2 disordered regions span residues 1 to 62 and 113 to 169; these read MAEA…EKEG and LSGD…GNSP. Residues 17–36 are compositionally biased toward basic and acidic residues; that stretch reads SEDHDFDPTAEMLVHDYDDE. Residues Ser52, Ser53, and Ser114 each carry the phosphoserine modification. Residues 121–134 are compositionally biased toward polar residues; that stretch reads QSSADDLTPSVTSH. Residues 154-163 are compositionally biased toward acidic residues; it reads KESEIEDVET. Residue Ser156 is modified to Phosphoserine. The residue at position 163 (Thr163) is a Phosphothreonine. Ser165 and Ser168 each carry phosphoserine. Residues 174–273 enclose the ELM2 domain; sequence REIMIGLEYQ…EAIERYCCNG (100 aa). In terms of domain architecture, SANT spans 278 to 330; that stretch reads EGMTAWTEEECRSFEHALMLHGKDFHLIQKDKVRSRTVAECVAFYYMWKKSER.

Its subcellular location is the nucleus. Transcriptional repressor. The sequence is that of Mesoderm induction early response protein 3 (Mier3) from Mus musculus (Mouse).